Reading from the N-terminus, the 662-residue chain is ATP-dependent zinc metalloprotease YME1 homolog (662 aa).

206-213 is an ATP binding site; it reads GPPGVGKT. Histidine 425 serves as a coordination point for Zn(2+). Glutamate 426 is a catalytic residue. Zn(2+) contacts are provided by histidine 429 and aspartate 503.

It in the N-terminal section; belongs to the AAA ATPase family. This sequence in the C-terminal section; belongs to the peptidase M41 family. Zn(2+) is required as a cofactor.

In terms of biological role, putative ATP-dependent protease. This Schistosoma mansoni (Blood fluke) protein is ATP-dependent zinc metalloprotease YME1 homolog.